The primary structure comprises 966 residues: Mitogen-activated protein kinase kinase kinase 13 (966 aa).

Positions 1-59 (MANPQEHLSCSSSPRLPLSENKTFNGLQDDLAPMGSHASPKLLKDQQEKGMVQTELAEG) are disordered. Over residues 8–19 (LSCSSSPRLPLS) the composition is skewed to low complexity. Residues 168–409 (ISELQWLGSG…FRQTLMHLDI (242 aa)) enclose the Protein kinase domain. ATP is bound by residues 174-182 (LGSGAQGAV) and Lys195. Catalysis depends on Asp279, which acts as the Proton acceptor. Leucine-zipper stretches follow at residues 433–454 (VKKH…DEEL) and 486–507 (LSAI…EQAV). Positions 457-496 (RRREELRHALDIREHYERKLERANNLYMELSAIMLQLEMR) form a coiled coil. Disordered stretches follow at residues 561-663 (EVAP…GQDI), 743-874 (LDVP…DELA), and 937-966 (QFEE…SATW). The span at 567–581 (SPLSGSPKLSSSSSK) shows a compositional bias: low complexity. Residues 582–594 (SRYRSKPRHRRGN) show a composition bias toward basic residues. Residues 609–622 (QPAQEDSPHPTSLH) show a composition bias toward polar residues. Residues 629–642 (PSSQHHNLLQQQYQ) are compositionally biased toward low complexity. Residues 814 to 827 (DSSEEEEGEVDSEV) show a composition bias toward acidic residues. The tract at residues 815-828 (SSEEEEGEVDSEVE) is acidic. Polar residues predominate over residues 840-855 (SSCQSYSTFSSENFSV). Over residues 939 to 950 (EESDCDSSDGEC) the composition is skewed to acidic residues. The segment covering 954 to 966 (TVRTNKHYSSATW) has biased composition (polar residues).

This sequence belongs to the protein kinase superfamily. Ser/Thr protein kinase family. In terms of assembly, homodimer; forms dimers through the leucine-zipper motif. Interacts with the C-terminus of MAPK8IP1 through the kinase catalytic domain. Binds PRDX3. Associates with the IKK complex through the kinase domain. It depends on Mg(2+) as a cofactor. Post-translationally, autophosphorylated on serine and threonine residues.

It is found in the cytoplasm. The protein localises to the membrane. The enzyme catalyses L-seryl-[protein] + ATP = O-phospho-L-seryl-[protein] + ADP + H(+). It catalyses the reaction L-threonyl-[protein] + ATP = O-phospho-L-threonyl-[protein] + ADP + H(+). With respect to regulation, activated by autophosphorylation and homodimerization. In terms of biological role, activates the JUN N-terminal pathway through activation of the MAP kinase kinase MAP2K7. Acts synergistically with PRDX3 to regulate the activation of NF-kappa-B in the cytosol. This activation is kinase-dependent and involves activating the IKK complex, the IKBKB-containing complex that phosphorylates inhibitors of NF-kappa-B. This chain is Mitogen-activated protein kinase kinase kinase 13 (MAP3K13), found in Bos taurus (Bovine).